We begin with the raw amino-acid sequence, 418 residues long: Flavin-dependent L-tryptophan oxidase VioA (418 aa).

Residue Gly-13 coordinates Mg(2+). Ser-15 contributes to the FAD binding site. Position 16 (Gly-16) interacts with Mg(2+). Residues Asp-38, Arg-46, and Arg-64 each contribute to the FAD site. Substrate-binding residues include Arg-64 and His-163. Leu-208 lines the FAD pocket. Ala-240 serves as a coordination point for Mg(2+). Tyr-309 lines the substrate pocket. Position 398 (Met-398) interacts with FAD.

Belongs to the flavin monoamine oxidase family. Homodimer. Requires FAD as cofactor. The cofactor is Mg(2+).

The catalysed reaction is L-tryptophan + O2 = 2-iminio-3-(indol-3-yl)propanoate + H2O2. The enzyme catalyses 7-chloro-L-tryptophan + O2 = 3-(7-chloroindol-3-yl)-2-iminopropanoate + H2O2. It participates in pigment biosynthesis; violacein biosynthesis. In terms of biological role, the enzyme generates the imine form of indole 3-pyruvate (IPA) from L-tryptophan (L-Trp), with concomitant two-electron reduction of O(2) to H(2)O(2). In Chromobacterium violaceum (strain ATCC 12472 / DSM 30191 / JCM 1249 / CCUG 213 / NBRC 12614 / NCIMB 9131 / NCTC 9757 / MK), this protein is Flavin-dependent L-tryptophan oxidase VioA (vioA).